A 259-amino-acid polypeptide reads, in one-letter code: Alpha-acetolactate decarboxylase (259 aa).

The protein belongs to the alpha-acetolactate decarboxylase family.

The enzyme catalyses (2S)-2-acetolactate + H(+) = (R)-acetoin + CO2. The protein operates within polyol metabolism; (R,R)-butane-2,3-diol biosynthesis; (R,R)-butane-2,3-diol from pyruvate: step 2/3. In terms of biological role, converts acetolactate into acetoin, which can be excreted by the cells. This may be a mechanism for controlling the internal pH of cells in the stationary stage. The chain is Alpha-acetolactate decarboxylase (budA) from Raoultella terrigena (Klebsiella terrigena).